We begin with the raw amino-acid sequence, 75 residues long: Protein RALF-like 9 (75 aa).

The signal sequence occupies residues 1 to 28; it reads MGMSKSIKVILSLALVVFLALAATKVEA. Disulfide bonds link C46-C54 and C66-C72.

This sequence belongs to the plant rapid alkalinization factor (RALF) family.

Its subcellular location is the secreted. Functionally, cell signaling peptide that may regulate plant stress, growth, and development. Mediates a rapid alkalinization of extracellular space by mediating a transient increase in the cytoplasmic Ca(2+) concentration leading to a calcium-dependent signaling events through a cell surface receptor and a concomitant activation of some intracellular mitogen-activated protein kinases. The protein is Protein RALF-like 9 (RALFL9) of Arabidopsis thaliana (Mouse-ear cress).